A 121-amino-acid polypeptide reads, in one-letter code: Large ribosomal subunit protein bL12 (121 aa).

Belongs to the bacterial ribosomal protein bL12 family. Homodimer. Part of the ribosomal stalk of the 50S ribosomal subunit. Forms a multimeric L10(L12)X complex, where L10 forms an elongated spine to which 2 to 4 L12 dimers bind in a sequential fashion. Binds GTP-bound translation factors.

Functionally, forms part of the ribosomal stalk which helps the ribosome interact with GTP-bound translation factors. Is thus essential for accurate translation. The sequence is that of Large ribosomal subunit protein bL12 from Clostridium beijerinckii (strain ATCC 51743 / NCIMB 8052) (Clostridium acetobutylicum).